The chain runs to 370 residues: Calcium-binding protein 1 (370 aa).

Positions M1–A198 are disordered. G2 is lipidated: N-myristoyl glycine. G4 is lipidated: S-palmitoyl cysteine. Low complexity-rich tracts occupy residues H50–H61, K68–R84, and A148–S157. 4 EF-hand domains span residues E225 to M260, G279 to A296, I302 to H337, and V339 to R370. Ca(2+) is bound by residues D238, D240, D242, Y244, and D249. 4 residues coordinate Mg(2+): D238, D240, D242, and Y244. Ca(2+)-binding residues include D315, N317, D319, and E321. At S323 the chain carries Phosphoserine. Ca(2+) contacts are provided by E326, D352, L353, N354, D356, G357, R358, D360, and E363.

As to quaternary structure, homodimer; when bound to calcium or magnesium. Interacts (via C-terminus) with ITPR1, ITPR2 and ITPR3. This binding is calcium dependent and the interaction correlates with calcium concentration. An additional calcium-independent interaction with the N-terminus of ITPR1 results in a decreased InsP(3) binding to the receptor. Interacts with CACNA1A (via C-terminal CDB motif) in the pre- and postsynaptic membranes. Interacts with CACNA1C (via C-terminal C and IQ motifs). The binding to the C motif is calcium independent whereas the binding to IQ requires the presence of calcium and is mutually exclusive with calmodulin binding. Interacts with CACNA1D. Interacts with TRPC5 (via C-terminus). Interacts (via EF-hands 1 and 2) at microtubules with MAP1LC3B. Interacts with MYO1C. Interacts (via EF-hands 1 and 2) with NSMF (via the central NLS-containing motif region), the interaction occurs in a calcium dependent manner after synaptic NMDA receptor stimulation and prevents nuclear import of NSMF. Interacts with SPACA9. Post-translationally, phosphorylated. The phosphorylation regulates the activity. In terms of tissue distribution, retina and brain. Somatodendritic compartment of neurons. Calbrain was found exclusively in brain where it is abundant in the hippocampus, habenular area in the epithalamus and in the cerebellum.

The protein resides in the cytoplasm. The protein localises to the cytoskeleton. Its subcellular location is the perinuclear region. It is found in the cell membrane. It localises to the golgi apparatus. The protein resides in the postsynaptic density. The protein localises to the cell cortex. Functionally, modulates calcium-dependent activity of inositol 1,4,5-triphosphate receptors (ITPRs). Inhibits agonist-induced intracellular calcium signaling. Enhances inactivation and does not support calcium-dependent facilitation of voltage-dependent P/Q-type calcium channels. Causes calcium-dependent facilitation and inhibits inactivation of L-type calcium channels by binding to the same sites as calmodulin in the C-terminal domain of CACNA1C, but has an opposite effect on channel function. Suppresses the calcium-dependent inactivation of CACNA1D. Inhibits TRPC5 channels. Prevents NMDA receptor-induced cellular degeneration. Required for the normal transfer of light signals through the retina. This is Calcium-binding protein 1 (CABP1) from Homo sapiens (Human).